A 105-amino-acid polypeptide reads, in one-letter code: Large ribosomal subunit protein eL36 (105 aa).

Residues 1 to 36 are disordered; the sequence is MAQERSGIAVGLNKGHKTTPLNTPKTRISRSKGKAS. The span at 27-36 shows a compositional bias: basic residues; the sequence is RISRSKGKAS.

Belongs to the eukaryotic ribosomal protein eL36 family. In terms of assembly, component of the large ribosomal subunit (LSU).

It is found in the cytoplasm. Functionally, component of the ribosome, a large ribonucleoprotein complex responsible for the synthesis of proteins in the cell. The small ribosomal subunit (SSU) binds messenger RNAs (mRNAs) and translates the encoded message by selecting cognate aminoacyl-transfer RNA (tRNA) molecules. The large subunit (LSU) contains the ribosomal catalytic site termed the peptidyl transferase center (PTC), which catalyzes the formation of peptide bonds, thereby polymerizing the amino acids delivered by tRNAs into a polypeptide chain. The nascent polypeptides leave the ribosome through a tunnel in the LSU and interact with protein factors that function in enzymatic processing, targeting, and the membrane insertion of nascent chains at the exit of the ribosomal tunnel. The sequence is that of Large ribosomal subunit protein eL36 from Emericella nidulans (strain FGSC A4 / ATCC 38163 / CBS 112.46 / NRRL 194 / M139) (Aspergillus nidulans).